The sequence spans 64 residues: Large ribosomal subunit protein bL32 (64 aa).

This sequence belongs to the bacterial ribosomal protein bL32 family.

This is Large ribosomal subunit protein bL32 from Flavobacterium psychrophilum (strain ATCC 49511 / DSM 21280 / CIP 103535 / JIP02/86).